The primary structure comprises 146 residues: Microsomal glutathione S-transferase 2 (146 aa).

3 helical membrane-spanning segments follow: residues 6–26 (ILLAALSVLSACQQSYFAMQV), 59–79 (FYPIFIITLWMAGWYFNQVFA), and 111–131 (SLGVLALLTVLGAVGILNSFL).

The protein belongs to the MAPEG family. In terms of assembly, homotrimer.

It localises to the endoplasmic reticulum membrane. The protein resides in the microsome membrane. The catalysed reaction is RX + glutathione = an S-substituted glutathione + a halide anion + H(+). It carries out the reaction 1-chloro-2,4-dinitrobenzene + glutathione = 2,4-dinitrophenyl-S-glutathione + chloride + H(+). It catalyses the reaction leukotriene C4 = leukotriene A4 + glutathione. The enzyme catalyses (5S)-hydroperoxy-(6E,8Z,11Z,14Z)-eicosatetraenoate + 2 glutathione = (5S)-hydroxy-(6E,8Z,11Z,14Z)-eicosatetraenoate + glutathione disulfide + H2O. With respect to regulation, each monomer binds on GSH molecule but only one subunit is catalytically active. Functionally, catalyzes several different glutathione-dependent reactions. Catalyzes the glutathione-dependent reduction of lipid hydroperoxides, such as 5-HPETE. Has glutathione transferase activity, toward xenobiotic electrophiles, such as 1-chloro-2, 4-dinitrobenzene (CDNB). Also catalyzes the conjugation of leukotriene A4 with reduced glutathione to form leukotriene C4 (LTC4). Involved in oxidative DNA damage induced by ER stress and anticancer agents by activating LTC4 biosynthetic machinery in nonimmune cells. The polypeptide is Microsomal glutathione S-transferase 2 (MGST2) (Bos taurus (Bovine)).